A 1499-amino-acid chain; its full sequence is Ring canal kelch homolog (1499 aa).

The span at 56–66 shows a compositional bias: polar residues; sequence LDESSQKQLPR. Residues 56–75 form a disordered region; that stretch reads LDESSQKQLPRSNGKEKTTG. Residues 100-166 enclose the BTB domain; it reads CDVVLVAEGI…VYRAVVEVTE (67 aa). Kelch repeat units follow at residues 351-396, 397-443, 444-490, 492-539, 541-586, and 588-634; these read VLLV…VLGD, KVYA…VLNN, CIYA…VVNG, LYAV…VLDN, LYAV…AHNG, and LYVV…MIDK. Sec-637 is a non-standard amino acid (selenocysteine). Disordered regions lie at residues 679–714, 750–786, 825–856, 984–1017, 1033–1085, 1107–1160, 1301–1321, and 1334–1499; these read AGQA…GNNV, LQYA…GGGG, AGYD…CPNL, NQSN…SSSV, SMNN…GNGG, ASTS…PVDV, QVGR…PLRT, and ARSP…TASE. A compositionally biased stretch (low complexity) spans 698–713; it reads NPEPANSNNSAPNGNN. Residues 776 to 786 show a composition bias toward gly residues; the sequence is GERGAVGGGGG. Residues 986–1003 are compositionally biased toward low complexity; sequence SNSSSASSASPYGANGPA. A compositionally biased stretch (polar residues) spans 1004-1017; that stretch reads TTSQPNPTKDSSSV. A compositionally biased stretch (low complexity) spans 1040-1054; sequence SSAAHGTASGSAPAA. The segment covering 1065-1085 has biased composition (gly residues); that stretch reads ISGGASGGGAGGAGSSGGNGG. A compositionally biased stretch (low complexity) spans 1107 to 1119; it reads ASTSTTLGGKSTG. Residues 1135–1147 are compositionally biased toward polar residues; that stretch reads GPSDPTAGTSAPQ. Positions 1348 to 1359 are enriched in basic and acidic residues; it reads NREKPREVRRIT. The segment covering 1401 to 1410 has biased composition (low complexity); the sequence is SSASSSSDSD. Polar residues predominate over residues 1460–1471; it reads VGSSSNETSDSL.

It is found in the cytoplasm. Its subcellular location is the cytoskeleton. Functionally, may play a role in organizing the actin cytoskeleton. This chain is Ring canal kelch homolog, found in Anopheles stephensi (Indo-Pakistan malaria mosquito).